Here is a 414-residue protein sequence, read N- to C-terminus: Calcium/calmodulin-dependent protein kinase cmkA (414 aa).

The region spanning 23–278 (YRFGRTLGAG…SEEALKHPWL (256 aa)) is the Protein kinase domain. ATP-binding positions include 29-37 (LGAGTYGIV) and Lys-50. Asp-142 acts as the Proton acceptor in catalysis. Positions 278–314 (LKGESASDRDLLPEIRAYIARSRLKRGIEIIKLANRI) are autoinhibitory domain. The tract at residues 293 to 315 (RAYIARSRLKRGIEIIKLANRIE) is calmodulin-binding. Disordered stretches follow at residues 320 to 375 (QEED…KRSL) and 394 to 414 (EMKE…RAHS). Over residues 351 to 364 (STENSNTHPASTGN) the composition is skewed to polar residues.

It belongs to the protein kinase superfamily. CAMK Ser/Thr protein kinase family. CaMK subfamily. In terms of assembly, monomer. Post-translationally, autophosphorylated in a calcium/calmodulin-dependent manner.

The catalysed reaction is L-seryl-[protein] + ATP = O-phospho-L-seryl-[protein] + ADP + H(+). It catalyses the reaction L-threonyl-[protein] + ATP = O-phospho-L-threonyl-[protein] + ADP + H(+). With respect to regulation, activated by Ca(2+)/calmodulin. Binding of calmodulin may relieve intrasteric autoinhibition. In terms of biological role, calcium/calmodulin-dependent protein kinase. Required in nuclear division cycle for progression from G2 to mitosis. Required for hyphal growth. This is Calcium/calmodulin-dependent protein kinase cmkA (cmkA) from Emericella nidulans (strain FGSC A4 / ATCC 38163 / CBS 112.46 / NRRL 194 / M139) (Aspergillus nidulans).